Consider the following 315-residue polypeptide: Acetyl-coenzyme A carboxylase carboxyl transferase subunit alpha (315 aa).

The 255-residue stretch at 38 to 292 (RLQKKSNELT…KLRLKEDLAE (255 aa)) folds into the CoA carboxyltransferase C-terminal domain.

Belongs to the AccA family. Acetyl-CoA carboxylase is a heterohexamer composed of biotin carboxyl carrier protein (AccB), biotin carboxylase (AccC) and two subunits each of ACCase subunit alpha (AccA) and ACCase subunit beta (AccD).

Its subcellular location is the cytoplasm. It catalyses the reaction N(6)-carboxybiotinyl-L-lysyl-[protein] + acetyl-CoA = N(6)-biotinyl-L-lysyl-[protein] + malonyl-CoA. Its pathway is lipid metabolism; malonyl-CoA biosynthesis; malonyl-CoA from acetyl-CoA: step 1/1. Functionally, component of the acetyl coenzyme A carboxylase (ACC) complex. First, biotin carboxylase catalyzes the carboxylation of biotin on its carrier protein (BCCP) and then the CO(2) group is transferred by the carboxyltransferase to acetyl-CoA to form malonyl-CoA. The polypeptide is Acetyl-coenzyme A carboxylase carboxyl transferase subunit alpha (Haemophilus influenzae (strain 86-028NP)).